A 229-amino-acid chain; its full sequence is MELLLLSNSTLPGKAWLEHALPLIANQLNGRRSAVFIPFAGVTQTWDEYTDKTAEVLAPLGINVTGIHRVADPLAAIEKAEIIIVGGGNTFQLLKESRERELLAPVADRVKRGALYIGWSAGANLACPTIRTTNDMPIVDPNGFDALDLFPLQINPHFTNALPEGHKGETREQRIRELLVVAPELTVIGLPEGNWIQVSNGQAVLGGPNTTWVFKAGEEAVALEAGHRF.

Catalysis depends on charge relay system residues S120, D135, and H157.

This sequence belongs to the peptidase S51 family.

Its subcellular location is the cytoplasm. It catalyses the reaction Dipeptidase E catalyzes the hydrolysis of dipeptides Asp-|-Xaa. It does not act on peptides with N-terminal Glu, Asn or Gln, nor does it cleave isoaspartyl peptides.. Functionally, hydrolyzes dipeptides containing N-terminal aspartate residues. May play a role in allowing the cell to use peptide aspartate to spare carbon otherwise required for the synthesis of the aspartate family of amino acids. The polypeptide is Peptidase E (Salmonella paratyphi A (strain AKU_12601)).